The sequence spans 43 residues: Protein PsbN (43 aa).

The helical transmembrane segment at 7-29 threads the bilayer; the sequence is VTIFLSGLLVSFTGYALYTAFGQ.

The protein belongs to the PsbN family.

It is found in the plastid. The protein localises to the chloroplast thylakoid membrane. Functionally, may play a role in photosystem I and II biogenesis. The protein is Protein PsbN of Ipomoea purpurea (Common morning glory).